The chain runs to 384 residues: Galactokinase (384 aa).

Substrate is bound at residue 34–37; it reads EHTD. Position 123-129 (123-129) interacts with ATP; it reads SSGLSSS. Residues Ser-129 and Glu-161 each coordinate Mg(2+). The active-site Proton acceptor is the Asp-173. Tyr-222 serves as a coordination point for substrate.

It belongs to the GHMP kinase family. GalK subfamily.

The protein localises to the cytoplasm. The catalysed reaction is alpha-D-galactose + ATP = alpha-D-galactose 1-phosphate + ADP + H(+). It participates in carbohydrate metabolism; galactose metabolism. Functionally, catalyzes the transfer of the gamma-phosphate of ATP to D-galactose to form alpha-D-galactose-1-phosphate (Gal-1-P). The protein is Galactokinase of Glaesserella parasuis serovar 5 (strain SH0165) (Haemophilus parasuis).